The following is a 128-amino-acid chain: LIM domain-containing protein 2 (128 aa).

Met-1 is subject to N-acetylmethionine. The disordered stretch occupies residues 1 to 25; the sequence is MFQAAGAAQATPSHEAKGSSGSSTV. Residues 39-99 form the LIM zinc-binding domain; the sequence is ETCAACQKTV…RPHFQQLFKS (61 aa). Residues Cys-41, Cys-44, His-62, Cys-65, Cys-68, Cys-71, Cys-89, and His-92 each coordinate Zn(2+).

Interacts with ILK.

It localises to the cytoplasm. The protein resides in the nucleus. Acts as an activator of the protein-kinase ILK, thereby regulating cell motility. This Mus musculus (Mouse) protein is LIM domain-containing protein 2.